The chain runs to 609 residues: RAS guanyl-releasing protein 2 (609 aa).

Residue A2 is the site of N-myristoyl glycine attachment. The region spanning T4 to T126 is the N-terminal Ras-GEF domain. L7 carries the S-palmitoyl cysteine lipid modification. Residues S116, S117, and S147 each carry the phosphoserine modification. The region spanning E154 to R387 is the Ras-GEF domain. The interval L382–V406 is disordered. EF-hand domains are found at residues H426 to L461 and R455 to V490. Residues D439, D441, D443, H445, E450, D468, N470, D472, C474, and E479 each coordinate Ca(2+). The segment at V498–C548 adopts a Phorbol-ester/DAG-type zinc-finger fold. Residues S554 and S576 each carry the phosphoserine modification. A disordered region spans residues L557–I592.

It belongs to the RASGRP family. As to quaternary structure, forms a signaling complex with RAP1 and BRAF. Interacts with RAP1. Interacts with F-actin. Post-translationally, isoform 2 is palmitoylated and myristoylated. As to expression, detected in platelets, neutrophils and T lymphocytes (at protein level). Expressed in brain where it is enriched in the striatum. Also expressed in the hematopoietic system. Detected in heart, brain, lung, placenta, liver, skeletal muscle and kidney.

The protein localises to the cytoplasm. The protein resides in the cytosol. Its subcellular location is the cell membrane. It is found in the synapse. It localises to the synaptosome. The protein localises to the cell projection. The protein resides in the ruffle membrane. With respect to regulation, isoform 1 and isoform 2 are differently regulated by calcium and DAG. Functionally, functions as a calcium- and DAG-regulated nucleotide exchange factor specifically activating Rap through the exchange of bound GDP for GTP. May also activate other GTPases such as RRAS, RRAS2, NRAS, KRAS but not HRAS. Functions in aggregation of platelets and adhesion of T-lymphocytes and neutrophils probably through inside-out integrin activation. May function in the muscarinic acetylcholine receptor M1/CHRM1 signaling pathway. This Homo sapiens (Human) protein is RAS guanyl-releasing protein 2 (RASGRP2).